The chain runs to 169 residues: MLNILKNNNNKIQGRLSIWLIKHNLKHRPLGFDYQGIETLQIRSEDWPSLAVALYVYGFNYLRSQCAYDVEPGGLLASVYHFTKITDNADQPEEICIKIFILRKNPKIPSIFWVWKSADFQERESYDMFGIFYENHPCLKRILMPDSWLGWPLRKDYIVPNFYELQDAY.

This sequence belongs to the complex I 30 kDa subunit family. In terms of assembly, NDH is composed of at least 16 different subunits, 5 of which are encoded in the nucleus.

The protein localises to the plastid. Its subcellular location is the chloroplast thylakoid membrane. The enzyme catalyses a plastoquinone + NADH + (n+1) H(+)(in) = a plastoquinol + NAD(+) + n H(+)(out). The catalysed reaction is a plastoquinone + NADPH + (n+1) H(+)(in) = a plastoquinol + NADP(+) + n H(+)(out). Functionally, NDH shuttles electrons from NAD(P)H:plastoquinone, via FMN and iron-sulfur (Fe-S) centers, to quinones in the photosynthetic chain and possibly in a chloroplast respiratory chain. The immediate electron acceptor for the enzyme in this species is believed to be plastoquinone. Couples the redox reaction to proton translocation, and thus conserves the redox energy in a proton gradient. This is NAD(P)H-quinone oxidoreductase subunit J, chloroplastic from Marchantia polymorpha (Common liverwort).